A 250-amino-acid chain; its full sequence is uncharacterized protein (250 aa).

Residues 2–22 (ILRIIIFVIIILVVSLLLIYF) traverse the membrane as a helical segment.

Its subcellular location is the membrane. This is an uncharacterized protein from Acanthamoeba polyphaga (Amoeba).